The following is a 448-amino-acid chain: 26S proteasome regulatory subunit 4 homolog (448 aa).

The span at 1–16 (MGQGTPGGMGKQGGAP) shows a compositional bias: gly residues. Disordered regions lie at residues 1–56 (MGQG…AAAR) and 93–112 (LRPT…DLRG). Basic and acidic residues-rich tracts occupy residues 17–33 (GDRK…RKFE) and 93–111 (LRPT…DDLR). 234 to 241 (GEPGTGKT) contacts ATP.

Belongs to the AAA ATPase family.

It localises to the cytoplasm. The protein resides in the nucleus. Its function is as follows. The 26S proteasome is involved in the ATP-dependent degradation of ubiquitinated proteins. The regulatory (or ATPase) complex confers ATP dependency and substrate specificity to the 26S complex. The chain is 26S proteasome regulatory subunit 4 homolog (TBP2) from Oryza sativa subsp. japonica (Rice).